The sequence spans 166 residues: MLMIRQRTTARPEWDAELELSLEARSKSRLRCFTTAGEDVGLFLERGQPPLADGDFLLADDGRLVRVRARPERLLHVACANAFELTRAAYHLGNRHVALQIGDGWLRLLDDYVLEDMLRQLGARVETVEAPFQPEHGAYGGGHHHSHGGEAEFSYAPKLHQFGVRK.

This sequence belongs to the UreE family.

The protein resides in the cytoplasm. Functionally, involved in urease metallocenter assembly. Binds nickel. Probably functions as a nickel donor during metallocenter assembly. The chain is Urease accessory protein UreE from Azotobacter vinelandii (strain DJ / ATCC BAA-1303).